The sequence spans 110 residues: Ribonuclease P protein component 1 (110 aa).

This sequence belongs to the eukaryotic/archaeal RNase P protein component 1 family. In terms of assembly, consists of a catalytic RNA component and at least 4-5 protein subunits.

The protein resides in the cytoplasm. It catalyses the reaction Endonucleolytic cleavage of RNA, removing 5'-extranucleotides from tRNA precursor.. Part of ribonuclease P, a protein complex that generates mature tRNA molecules by cleaving their 5'-ends. This Methanosarcina barkeri (strain Fusaro / DSM 804) protein is Ribonuclease P protein component 1.